Consider the following 323-residue polypeptide: tRNA dimethylallyltransferase (323 aa).

Residue 12–19 coordinates ATP; that stretch reads GPTASGKT. A substrate-binding site is contributed by 14–19; it reads TASGKT. Interaction with substrate tRNA stretches follow at residues 37–40 and 161–165; these read DSAL and QRLVR.

The protein belongs to the IPP transferase family. Monomer. It depends on Mg(2+) as a cofactor.

The catalysed reaction is adenosine(37) in tRNA + dimethylallyl diphosphate = N(6)-dimethylallyladenosine(37) in tRNA + diphosphate. Functionally, catalyzes the transfer of a dimethylallyl group onto the adenine at position 37 in tRNAs that read codons beginning with uridine, leading to the formation of N6-(dimethylallyl)adenosine (i(6)A). The polypeptide is tRNA dimethylallyltransferase (Azotobacter vinelandii (strain DJ / ATCC BAA-1303)).